We begin with the raw amino-acid sequence, 302 residues long: Oxygen-dependent coproporphyrinogen-III oxidase (302 aa).

S94 is a binding site for substrate. H98 and H108 together coordinate a divalent metal cation. The active-site Proton donor is the H108. 110–112 is a substrate binding site; that stretch reads NVR. Positions 147 and 177 each coordinate a divalent metal cation. The important for dimerization stretch occupies residues 242-277; sequence YVEFNLVYDRGTLFGLQTGGRTESILMSMPPLVRWQ. 260-262 lines the substrate pocket; that stretch reads GGR.

The protein belongs to the aerobic coproporphyrinogen-III oxidase family. In terms of assembly, homodimer. A divalent metal cation is required as a cofactor.

The protein resides in the cytoplasm. It carries out the reaction coproporphyrinogen III + O2 + 2 H(+) = protoporphyrinogen IX + 2 CO2 + 2 H2O. It participates in porphyrin-containing compound metabolism; protoporphyrin-IX biosynthesis; protoporphyrinogen-IX from coproporphyrinogen-III (O2 route): step 1/1. Functionally, involved in the heme biosynthesis. Catalyzes the aerobic oxidative decarboxylation of propionate groups of rings A and B of coproporphyrinogen-III to yield the vinyl groups in protoporphyrinogen-IX. This is Oxygen-dependent coproporphyrinogen-III oxidase from Shewanella oneidensis (strain ATCC 700550 / JCM 31522 / CIP 106686 / LMG 19005 / NCIMB 14063 / MR-1).